We begin with the raw amino-acid sequence, 429 residues long: 3-phosphoshikimate 1-carboxyvinyltransferase (429 aa).

Residues Lys-21, Ser-22, and Arg-26 each contribute to the 3-phosphoshikimate site. Phosphoenolpyruvate is bound at residue Lys-21. 2 residues coordinate phosphoenolpyruvate: Gly-94 and Arg-122. 3-phosphoshikimate-binding residues include Ser-167, Gln-169, Asp-315, and Lys-342. Gln-169 is a phosphoenolpyruvate binding site. Asp-315 serves as the catalytic Proton acceptor. 2 residues coordinate phosphoenolpyruvate: Arg-346 and Arg-388.

The protein belongs to the EPSP synthase family. As to quaternary structure, monomer.

The protein resides in the cytoplasm. It carries out the reaction 3-phosphoshikimate + phosphoenolpyruvate = 5-O-(1-carboxyvinyl)-3-phosphoshikimate + phosphate. It functions in the pathway metabolic intermediate biosynthesis; chorismate biosynthesis; chorismate from D-erythrose 4-phosphate and phosphoenolpyruvate: step 6/7. Functionally, catalyzes the transfer of the enolpyruvyl moiety of phosphoenolpyruvate (PEP) to the 5-hydroxyl of shikimate-3-phosphate (S3P) to produce enolpyruvyl shikimate-3-phosphate and inorganic phosphate. In Desulforudis audaxviator (strain MP104C), this protein is 3-phosphoshikimate 1-carboxyvinyltransferase.